The following is a 156-amino-acid chain: Protein-export protein SecB (156 aa).

This sequence belongs to the SecB family. Homotetramer, a dimer of dimers. One homotetramer interacts with 1 SecA dimer.

It is found in the cytoplasm. Its function is as follows. One of the proteins required for the normal export of preproteins out of the cell cytoplasm. It is a molecular chaperone that binds to a subset of precursor proteins, maintaining them in a translocation-competent state. It also specifically binds to its receptor SecA. This Paraburkholderia phymatum (strain DSM 17167 / CIP 108236 / LMG 21445 / STM815) (Burkholderia phymatum) protein is Protein-export protein SecB.